A 124-amino-acid chain; its full sequence is Ribulose bisphosphate carboxylase small subunit (124 aa).

The protein belongs to the RuBisCO small chain family. In terms of assembly, heterohexadecamer of 8 large and 8 small subunits.

Functionally, ruBisCO catalyzes two reactions: the carboxylation of D-ribulose 1,5-bisphosphate, the primary event in carbon dioxide fixation, as well as the oxidative fragmentation of the pentose substrate. Both reactions occur simultaneously and in competition at the same active site. Although the small subunit is not catalytic it is essential for maximal activity. This chain is Ribulose bisphosphate carboxylase small subunit, found in Hydrogenophilus thermoluteolus (Pseudomonas hydrogenothermophila).